The primary structure comprises 247 residues: Large ribosomal subunit protein uL3 (247 aa).

2 disordered regions span residues arginine 124–methionine 145 and valine 218–glutamate 247. The span at valine 222–asparagine 241 shows a compositional bias: basic and acidic residues.

Belongs to the universal ribosomal protein uL3 family. In terms of assembly, part of the 50S ribosomal subunit. Forms a cluster with proteins L14 and L19.

Its function is as follows. One of the primary rRNA binding proteins, it binds directly near the 3'-end of the 23S rRNA, where it nucleates assembly of the 50S subunit. This Oenococcus oeni (strain ATCC BAA-331 / PSU-1) protein is Large ribosomal subunit protein uL3.